A 205-amino-acid polypeptide reads, in one-letter code: Phosphoribosyl-dephospho-CoA transferase (205 aa).

Residues Asp134 and Asp136 contribute to the active site.

It belongs to the MdcG family.

The enzyme catalyses apo-[malonate decarboxylase ACP] + 2'-(5''-triphospho-alpha-D-ribosyl)-3'-dephospho-CoA = holo-[malonate decarboxylase ACP] + diphosphate. Transfers 2'-(5-triphosphoribosyl)-3'-dephosphocoenzyme-A to the apo-[acyl-carrier-protein] of the malonate decarboxylase to yield holo-[acyl-carrier-protein]. The polypeptide is Phosphoribosyl-dephospho-CoA transferase (Klebsiella pneumoniae (strain 342)).